The primary structure comprises 206 residues: Protein tyrosine phosphatase receptor type C-associated protein (206 aa).

A helical membrane pass occupies residues 34-54 (VTVVLLLLLLLLLATGLALAW). Positions 98-173 (GSTDNDLERQ…PGPASAGGSA (76 aa)) are disordered. Serine 99 and serine 153 each carry phosphoserine. Low complexity predominate over residues 161 to 173 (LGSPGPASAGGSA).

As to quaternary structure, interacts with CD45/PTPRC. Post-translationally, phosphorylated on tyrosine residues.

The protein resides in the membrane. The sequence is that of Protein tyrosine phosphatase receptor type C-associated protein (PTPRCAP) from Homo sapiens (Human).